The following is a 752-amino-acid chain: Lid2 complex component jmj3 (752 aa).

Positions 34–75 constitute a JmjN domain; that stretch reads IPVVEPKISEFVDMESFIRRVERLGKKYGAIKVVRPSSVLNP. The region spanning 162–333 is the JmjC domain; sequence YTNRPSIPFY…NYEFSNLRRL (172 aa). 2 stretches are compositionally biased toward polar residues: residues 391–402 and 409–423; these read SFSQRDFDSPNS and LMSNHESASTEHFNS. The tract at residues 391–438 is disordered; sequence SFSQRDFDSPNSINPPSPLMSNHESASTEHFNSTTTTEKELSSLHVGE. Positions 427 to 438 are enriched in basic and acidic residues; that stretch reads TEKELSSLHVGE.

As to quaternary structure, component of the Lid2 complex composed of ash2, jmj3, lid2, sdc1 and snt2.

It is found in the nucleus. This chain is Lid2 complex component jmj3, found in Schizosaccharomyces pombe (strain 972 / ATCC 24843) (Fission yeast).